The chain runs to 77 residues: Translation initiation factor IF-1, chloroplastic (77 aa).

The region spanning 1–71 (MKEQKWIHEG…TRGRIIYRLR (71 aa)) is the S1-like domain.

It belongs to the IF-1 family. As to quaternary structure, component of the 30S ribosomal translation pre-initiation complex which assembles on the 30S ribosome in the order IF-2 and IF-3, IF-1 and N-formylmethionyl-tRNA(fMet); mRNA recruitment can occur at any time during PIC assembly.

The protein resides in the plastid. It localises to the chloroplast. One of the essential components for the initiation of protein synthesis. Stabilizes the binding of IF-2 and IF-3 on the 30S subunit to which N-formylmethionyl-tRNA(fMet) subsequently binds. Helps modulate mRNA selection, yielding the 30S pre-initiation complex (PIC). Upon addition of the 50S ribosomal subunit IF-1, IF-2 and IF-3 are released leaving the mature 70S translation initiation complex. This is Translation initiation factor IF-1, chloroplastic from Lactuca sativa (Garden lettuce).